We begin with the raw amino-acid sequence, 157 residues long: Ribosome maturation factor RimP (157 aa).

Belongs to the RimP family.

It localises to the cytoplasm. Functionally, required for maturation of 30S ribosomal subunits. This chain is Ribosome maturation factor RimP, found in Petrotoga mobilis (strain DSM 10674 / SJ95).